The primary structure comprises 743 residues: Protein will decrease acetylation (743 aa).

WD repeat units lie at residues glutamate 389–lysine 428, leucine 493–tryptophan 524, tyrosine 535–isoleucine 576, tyrosine 577–valine 618, phenylalanine 619–glutamate 660, and leucine 661–aspartate 702.

Belongs to the WD repeat TAF5 family. In terms of assembly, component of the Spt-Ada-Gcn5 acetyltransferase (SAGA) complex consisting of wda/Taf5L, Saf6, Taf9, Taf10b, Taf12, Ada1, Spt3, Spt7, Spt20, Sf3b3, Sf3b5, Nipped-A/Tra1, a histone acetyltransferase (HAT) module made up of Gcn5, Ada2b (Isoform B), Ada3 and Sgf29, and a deubiquitinase (DUB) module made up of not/nonstop, Sgf11 and e(y)2 tethered to SAGA by Atxn7. Not essential for the assembly or integrity of the SAGA complex. Not a component of the Ada2a-containing ATAC complex.

It localises to the nucleus. The protein localises to the chromosome. Functionally, component of the transcription regulatory complex SAGA, a multiprotein complex that activates transcription by remodeling chromatin and mediating histone acetylation and deubiquitination. The SAGA complex predominantly acetylates histone H3. Involved in acetylation of histone H3 on 'Lys-10' (H3K9ac) by the SAGA complex in the larval central nervous system. Involved in SAGA complex coactivator functions. Required for oogenesis. The sequence is that of Protein will decrease acetylation from Drosophila melanogaster (Fruit fly).